Reading from the N-terminus, the 210-residue chain is Glycerol-3-phosphate acyltransferase 2 (210 aa).

6 consecutive transmembrane segments (helical) span residues 4-24, 54-74, 82-102, 114-134, 141-161, and 163-183; these read LIMV…PAPY, FWPG…AMAV, LGIQ…PVWL, IGIL…CFLV, FPTL…WLGQ, and DLGK…MYIP.

This sequence belongs to the PlsY family. As to quaternary structure, probably interacts with PlsX.

Its subcellular location is the cell membrane. The enzyme catalyses an acyl phosphate + sn-glycerol 3-phosphate = a 1-acyl-sn-glycero-3-phosphate + phosphate. Its pathway is lipid metabolism; phospholipid metabolism. In terms of biological role, catalyzes the transfer of an acyl group from acyl-phosphate (acyl-PO(4)) to glycerol-3-phosphate (G3P) to form lysophosphatidic acid (LPA). This enzyme utilizes acyl-phosphate as fatty acyl donor, but not acyl-CoA or acyl-ACP. This is Glycerol-3-phosphate acyltransferase 2 from Dehalococcoides mccartyi (strain ATCC BAA-2266 / KCTC 15142 / 195) (Dehalococcoides ethenogenes (strain 195)).